Reading from the N-terminus, the 1188-residue chain is Zinc finger SWIM domain-containing protein 5 (1188 aa).

Residues 1–10 (MAEGGEREEL) show a composition bias toward basic and acidic residues. Disordered stretches follow at residues 1–46 (MAEG…GAGG) and 123–171 (AGAA…TGTA). Low complexity-rich tracts occupy residues 126 to 136 (AAGAAGASPVE) and 146 to 155 (AAPAGSAPGA). The segment covering 156-171 (AGAGSSPGLGAGTGTA) has biased composition (gly residues). An SWIM-type zinc finger spans residues 222 to 259 (YKVAISFDRCKITSVSCGCGNKDIFYCAHVVALSLYRI).

The polypeptide is Zinc finger SWIM domain-containing protein 5 (Zswim5) (Mus musculus (Mouse)).